Here is a 370-residue protein sequence, read N- to C-terminus: Calcium-binding protein 1 (370 aa).

The interval 1–198 is disordered; it reads MGGGDGAAFK…GRGDSVPAAA (198 aa). The N-myristoyl glycine moiety is linked to residue glycine 2. Glycine 4 carries S-palmitoyl cysteine lipidation. Low complexity-rich tracts occupy residues 50–61, 68–84, and 148–157; these read HASAGPAAMSSH, KTSL…GGSR, and ALPAAASRPS. EF-hand domains follow at residues 225–260, 279–296, 302–337, and 339–370; these read EEIE…MGYM, GHVD…KLLA, IGVK…LLGH, and VGHR…MMSR. Ca(2+) contacts are provided by aspartate 238, aspartate 240, aspartate 242, tyrosine 244, and aspartate 249. Aspartate 238, aspartate 240, aspartate 242, and tyrosine 244 together coordinate Mg(2+). Ca(2+)-binding residues include aspartate 315, asparagine 317, aspartate 319, and glutamate 321. Serine 323 carries the post-translational modification Phosphoserine. Ca(2+)-binding residues include glutamate 326, aspartate 352, leucine 353, asparagine 354, aspartate 356, glycine 357, arginine 358, aspartate 360, and glutamate 363.

Homodimer; when bound to calcium or magnesium. Interacts (via C-terminus) with ITPR1, ITPR2 and ITPR3. This binding is calcium dependent and the interaction correlates with calcium concentration. An additional calcium-independent interaction with the N-terminus of ITPR1 results in a decreased InsP(3) binding to the receptor. Interacts with CACNA1A (via C-terminal CDB motif) in the pre- and postsynaptic membranes. Interacts with CACNA1C (via C-terminal C and IQ motifs). The binding to the C motif is calcium independent whereas the binding to IQ requires the presence of calcium and is mutually exclusive with calmodulin binding. Interacts with CACNA1D. Interacts with TRPC5 (via C-terminus). Interacts (via EF-hands 1 and 2) at microtubules with MAP1LC3B. Interacts with MYO1C. Interacts (via EF-hands 1 and 2) with NSMF (via the central NLS-containing motif region), the interaction occurs in a calcium dependent manner after synaptic NMDA receptor stimulation and prevents nuclear import of NSMF. Interacts with SPACA9. In terms of processing, phosphorylated. The phosphorylation regulates the activity. As to expression, retina and brain. Somatodendritic compartment of neurons. Calbrain was found exclusively in brain where it is abundant in the hippocampus, habenular area in the epithalamus and in the cerebellum.

It is found in the cytoplasm. Its subcellular location is the cytoskeleton. The protein resides in the perinuclear region. It localises to the cell membrane. The protein localises to the golgi apparatus. It is found in the postsynaptic density. Its subcellular location is the cell cortex. Functionally, modulates calcium-dependent activity of inositol 1,4,5-triphosphate receptors (ITPRs). Inhibits agonist-induced intracellular calcium signaling. Enhances inactivation and does not support calcium-dependent facilitation of voltage-dependent P/Q-type calcium channels. Causes calcium-dependent facilitation and inhibits inactivation of L-type calcium channels by binding to the same sites as calmodulin in the C-terminal domain of CACNA1C, but has an opposite effect on channel function. Suppresses the calcium-dependent inactivation of CACNA1D. Inhibits TRPC5 channels. Prevents NMDA receptor-induced cellular degeneration. Required for the normal transfer of light signals through the retina. This chain is Calcium-binding protein 1 (CABP1), found in Homo sapiens (Human).